Reading from the N-terminus, the 118-residue chain is uncharacterized protein (118 aa).

Positions 1–18 are cleaved as a signal peptide; that stretch reads MSKLIFLFVVATLATIKA. Residue Asn-24 is glycosylated (N-linked (GlcNAc...) asparagine; by host).

This is an uncharacterized protein from Magallana gigas (Pacific oyster).